Here is a 690-residue protein sequence, read N- to C-terminus: Ectopic P granules protein 2 (690 aa).

4 coiled-coil regions span residues 20–181 (IELA…EREV), 359–409 (ELLR…TIQE), 458–494 (LESGKKKHANEILTVRNELEQSNAAHQSLRDQCSLLL), and 560–643 (ATIE…ETKR). An LIR 1 motif is present at residues 61 to 64 (YSTL). The segment at 381-385 (DFKIL) is required for interaction with lgg-1. The disordered stretch occupies residues 666–690 (EELDEEPKASTESEEKAEWEMVDEE). Positions 671–684 (EPKASTESEEKAEW) are enriched in basic and acidic residues. The LIR 2 signature appears at 684 to 687 (WEMV).

In terms of assembly, interacts with sepa-1. Interacts (via the LIR motifs) with lgg-1 and lgg-2. Shows strong interaction with lgg-1 and weak interaction with lgg-2.

It is found in the cytoplasm. Involved in autophagy. Thought to act as an adapter protein that brings PGL granules to autophagic structures containing lgg-1. Association with other adapters such as sepa-1 is required for the accumulation and degradation of germ cell specific P-granules by autophagy in somatic cells. This ensures exclusive localization of the P-granules in germ cells. May also play a role in the removal of sepa-1 from somatic cells. This chain is Ectopic P granules protein 2, found in Caenorhabditis elegans.